The chain runs to 298 residues: Bifunctional protein FolD (298 aa).

NADP(+) contacts are provided by residues 166 to 168 (GRS), Ser191, and Ile232.

It belongs to the tetrahydrofolate dehydrogenase/cyclohydrolase family. As to quaternary structure, homodimer.

The catalysed reaction is (6R)-5,10-methylene-5,6,7,8-tetrahydrofolate + NADP(+) = (6R)-5,10-methenyltetrahydrofolate + NADPH. It catalyses the reaction (6R)-5,10-methenyltetrahydrofolate + H2O = (6R)-10-formyltetrahydrofolate + H(+). Its pathway is one-carbon metabolism; tetrahydrofolate interconversion. In terms of biological role, catalyzes the oxidation of 5,10-methylenetetrahydrofolate to 5,10-methenyltetrahydrofolate and then the hydrolysis of 5,10-methenyltetrahydrofolate to 10-formyltetrahydrofolate. The chain is Bifunctional protein FolD from Maricaulis maris (strain MCS10) (Caulobacter maris).